The primary structure comprises 188 residues: MLSELFNSLASFFSNIFSLFEGKKETRILMIGLDGAGKSTLLYKLKLGDVVSTIPTIGFNVETIEYKNLSMTVWDVGGQHKIRPLWKHYYHGSNAVIFVVDSTDRERMDEVKEEIDNLLIQDELKGTQILVFANKQDMNNAMNTAEIVNSLDLNSIKDRKWYVQPCSAIRSDGIYEGFDWVANSLNNK.

GTP contacts are provided by residues 34-40, 75-79, and 134-137; these read DGAGKST, DVGGQ, and NKQD.

This sequence belongs to the small GTPase superfamily. Arf family.

It is found in the golgi apparatus. In terms of biological role, GTP-binding protein that may be involved in protein trafficking. May modulate vesicle budding and uncoating within the Golgi apparatus. The chain is ADP-ribosylation factor J (arrJ) from Dictyostelium discoideum (Social amoeba).